Consider the following 486-residue polypeptide: Matrilin-3 (486 aa).

An N-terminal signal peptide occupies residues 1 to 28 (MPRPAPARRLPGLLLLLWPLLLLPSAAP). The segment at 32-75 (ARPGFRRLETRGPGGSPGRRPSPAAPDGAPASGTSEPGRARGAG) is disordered. Over residues 49–64 (GRRPSPAAPDGAPASG) the composition is skewed to low complexity. Residues 83 to 258 (DLVFIIDSSR…GVIEKLSSRF (176 aa)) enclose the VWFA domain. Arginine 198 is modified (omega-N-methylarginine). 4 consecutive EGF-like domains span residues 264–305 (ALDP…KTCS), 306–347 (ALDR…KTCS), 348–389 (AQDK…KTCS), and 390–431 (VRDK…KTCS). Cystine bridges form between cysteine 268–cysteine 279, cysteine 275–cysteine 289, cysteine 291–cysteine 304, cysteine 310–cysteine 321, cysteine 317–cysteine 331, cysteine 333–cysteine 346, cysteine 352–cysteine 363, cysteine 359–cysteine 373, cysteine 375–cysteine 388, cysteine 394–cysteine 405, cysteine 401–cysteine 415, and cysteine 417–cysteine 430. Serine 441 is subject to Phosphoserine; by FAM20C. A Phosphothreonine; by FAM20C modification is found at threonine 442. Positions 456–480 (DKVSSYLQRLNTKLDDILEKLKINE) form a coiled coil.

Can form homooligomers (monomers, dimers, trimers and tetramers) and heterooligomers with matrilin-1. Interacts with COMP. Component of a complex containing at least CRELD2, MANF, MATN3 and PDIA4. As to expression, expressed only in cartilaginous tissues, such as vertebrae, ribs and shoulders.

The protein resides in the secreted. In terms of biological role, major component of the extracellular matrix of cartilage and may play a role in the formation of extracellular filamentous networks. In Homo sapiens (Human), this protein is Matrilin-3 (MATN3).